An 848-amino-acid chain; its full sequence is Translation initiation factor IF-2 (848 aa).

The tract at residues Thr-106–Ser-150 is disordered. Residues Ala-112–Thr-139 are compositionally biased toward polar residues. One can recognise a tr-type G domain in the interval Pro-347 to Lys-517. A G1 region spans residues Gly-356 to Thr-363. Residue Gly-356–Thr-363 coordinates GTP. The segment at Gly-381 to His-385 is G2. The G3 stretch occupies residues Asp-403–Gly-406. Residues Asp-403 to His-407 and Asn-457 to Asp-460 contribute to the GTP site. The segment at Asn-457–Asp-460 is G4. The tract at residues Ser-493–Leu-495 is G5.

The protein belongs to the TRAFAC class translation factor GTPase superfamily. Classic translation factor GTPase family. IF-2 subfamily.

It localises to the cytoplasm. One of the essential components for the initiation of protein synthesis. Protects formylmethionyl-tRNA from spontaneous hydrolysis and promotes its binding to the 30S ribosomal subunits. Also involved in the hydrolysis of GTP during the formation of the 70S ribosomal complex. The polypeptide is Translation initiation factor IF-2 (Orientia tsutsugamushi (strain Boryong) (Rickettsia tsutsugamushi)).